Reading from the N-terminus, the 269-residue chain is Oligoribonuclease, mitochondrial (269 aa).

In terms of domain architecture, Exonuclease spans 55 to 227 (LVWIDCEMTG…SDIKESIAQL (173 aa)). The active site involves tyrosine 184. Positions 240–269 (ETESVESIGSEQPESPSSSTSSLKRQRTDF) are disordered. The segment covering 245–261 (ESIGSEQPESPSSSTSS) has biased composition (low complexity).

This sequence belongs to the oligoribonuclease family.

It is found in the mitochondrion. Its function is as follows. 3'-to-5' exoribonuclease specific for small oligoribonucleotides. The chain is Oligoribonuclease, mitochondrial (REX2) from Saccharomyces cerevisiae (strain ATCC 204508 / S288c) (Baker's yeast).